The primary structure comprises 224 residues: Ribonuclease HII (224 aa).

An RNase H type-2 domain is found at 1-210 (MKVAGADEAG…AKKIEEKFKR (210 aa)). D7, E8, and D105 together coordinate a divalent metal cation.

This sequence belongs to the RNase HII family. Mn(2+) serves as cofactor. It depends on Mg(2+) as a cofactor.

It is found in the cytoplasm. It carries out the reaction Endonucleolytic cleavage to 5'-phosphomonoester.. Its function is as follows. Endonuclease that specifically degrades the RNA of RNA-DNA hybrids. This Pyrococcus abyssi (strain GE5 / Orsay) protein is Ribonuclease HII (rnhB).